A 538-amino-acid polypeptide reads, in one-letter code: Cytochrome P450 monooxygenase cfoH (538 aa).

A helical transmembrane segment spans residues 24 to 44; that stretch reads VLTFFAILLVAILLWYMIPYF. C471 is a binding site for heme.

Belongs to the cytochrome P450 family. Requires heme as cofactor.

It localises to the membrane. It functions in the pathway secondary metabolite biosynthesis; flavonoid biosynthesis. In terms of biological role, cytochrome P450 monooxygenase; part of the gene cluster that mediates the biosynthesis of chlorflavonin, a fungal flavonoid with acetolactate synthase inhibitory activity. Within the pathway, cfoH is responsible for the hydroxylation of the flavonoid skeleton at position C2'. The pathway begins with the PKS-NRPS hybrid synthetase cfoA that uses benzoic acid or p-hydroxybenzoic acid as a starter unit with four rounds of chain elongation using malonyl-CoA to form the chalcone skeleton. Then, a new type of chalcone isomerase, cfoK, catalyzes the conversion of the chalcone into a flavanone by a histidine-mediated oxa-Michael addition mechanism. The desaturation of flavanone to flavone is catalyzed by a new type of flavone synthase, the flavin mononucleotide (FMN)-dependent oxidoreductase cfoJ. Monooxygenases cfoF, cfoG, and P450 cfoH are responsible for the hydroxylation of the flavonoid skeleton at sites C3, C8, and C2', respectively. Like cfoF, the dehydratase cfoI plays also a role in the hydroxylation of position C3. Methyltransferases cfoB, cfoC, and cfoD then catalyze the methylation of C7-OH, C8-OH, and C3-OH, respectively. Finally, the monooxygenase cfoE is responsible for the chlorination of flavonoid at position C3'. The chain is Cytochrome P450 monooxygenase cfoH from Aspergillus candidus.